Here is a 314-residue protein sequence, read N- to C-terminus: MSRPRRRGRDIHGVLLLDKPQGMSSNDVLQKVKRIYNANRAGHTGALDPLATGMLPICLGEATKFSQYLLDSDKRYRVIARLGQRTDTSDADGQIVQERPVTFSAGQLASALETFRGDIEQIPSMYSALKYQGKKLYEYARLGIEVPREARPITVYELLFIRHEGNELELEVHCSKGTYIRTIIDDLGEKLGCGAHVIYLRRLTVSKYPVERMVTLEHLQALAAQAEQQGVPAAQLLDPLLMPMDSPASDYPVVNLPLTSSVYFKNGNPVRTSGAPLNGLVRVTEGEDGKFIGMGEIDDEGRVAPRRLVVEHPA.

His-43 is a binding site for substrate. Asp-48 acts as the Nucleophile in catalysis. The substrate site is built by Tyr-76, Tyr-179, and Leu-200.

This sequence belongs to the pseudouridine synthase TruB family. Type 1 subfamily.

The catalysed reaction is uridine(55) in tRNA = pseudouridine(55) in tRNA. Responsible for synthesis of pseudouridine from uracil-55 in the psi GC loop of transfer RNAs. In Salmonella arizonae (strain ATCC BAA-731 / CDC346-86 / RSK2980), this protein is tRNA pseudouridine synthase B.